The following is a 133-amino-acid chain: p53 and DNA damage-regulated protein 1 (133 aa).

Belongs to the prefoldin subunit beta family. In terms of assembly, component of the PAQosome complex which is responsible for the biogenesis of several protein complexes and which consists of R2TP complex members RUVBL1, RUVBL2, RPAP3 and PIH1D1, URI complex members PFDN2, PFDN6, PDRG1, UXT and URI1 as well as ASDURF, POLR2E and DNAAF10/WDR92.

The protein localises to the cytoplasm. May play a role in chaperone-mediated protein folding. The chain is p53 and DNA damage-regulated protein 1 (PDRG1) from Bos taurus (Bovine).